A 184-amino-acid polypeptide reads, in one-letter code: Mediator of RNA polymerase II transcription subunit 28 (184 aa).

Residues 77 to 105 (LLKEENFDLKQEIARKDELIRKHYEKIES) adopt a coiled-coil conformation.

Belongs to the Mediator complex subunit 28 family. As to quaternary structure, component of the Mediator complex.

It is found in the nucleus. Its function is as follows. Component of the Mediator complex, a coactivator involved in the regulated transcription of nearly all RNA polymerase II-dependent genes. Mediator functions as a bridge to convey information from gene-specific regulatory proteins to the basal RNA polymerase II transcription machinery. Mediator is recruited to promoters by direct interactions with regulatory proteins and serves as a scaffold for the assembly of a functional preinitiation complex with RNA polymerase II and the general transcription factors. This is Mediator of RNA polymerase II transcription subunit 28 (MED28) from Aedes aegypti (Yellowfever mosquito).